The following is a 258-amino-acid chain: Imidazole glycerol phosphate synthase subunit HisF (258 aa).

Residues aspartate 11 and aspartate 130 contribute to the active site.

Belongs to the HisA/HisF family. In terms of assembly, heterodimer of HisH and HisF.

It is found in the cytoplasm. It catalyses the reaction 5-[(5-phospho-1-deoxy-D-ribulos-1-ylimino)methylamino]-1-(5-phospho-beta-D-ribosyl)imidazole-4-carboxamide + L-glutamine = D-erythro-1-(imidazol-4-yl)glycerol 3-phosphate + 5-amino-1-(5-phospho-beta-D-ribosyl)imidazole-4-carboxamide + L-glutamate + H(+). It functions in the pathway amino-acid biosynthesis; L-histidine biosynthesis; L-histidine from 5-phospho-alpha-D-ribose 1-diphosphate: step 5/9. Its function is as follows. IGPS catalyzes the conversion of PRFAR and glutamine to IGP, AICAR and glutamate. The HisF subunit catalyzes the cyclization activity that produces IGP and AICAR from PRFAR using the ammonia provided by the HisH subunit. This chain is Imidazole glycerol phosphate synthase subunit HisF, found in Synechococcus sp. (strain CC9902).